A 462-amino-acid polypeptide reads, in one-letter code: Gastric inhibitory polypeptide receptor (462 aa).

An N-terminal signal peptide occupies residues 1–18; that stretch reads MPLRPRLLLLCLWGLLLQ. Residues 19–135 are Extracellular-facing; that stretch reads QAETDSEGQT…DQRLILERLQ (117 aa). Disulfide bonds link Cys-43–Cys-67, Cys-58–Cys-100, and Cys-81–Cys-115. Asn-59 and Asn-74 each carry an N-linked (GlcNAc...) asparagine glycan. A helical membrane pass occupies residues 136 to 158; the sequence is VVYTVGYSLSLGTLLLALLILSL. Residues 159 to 166 are Cytoplasmic-facing; it reads FRRLHCTR. The chain crosses the membrane as a helical span at residues 167 to 186; that stretch reads NYIHMNVFLSFMLRAVAILT. Residues 187-214 are Extracellular-facing; it reads RDRLLPTLGPYPGDRTLTLRNQALAACR. Residues 215-239 traverse the membrane as a helical segment; that stretch reads TAQIVTQYCVGANYTWLLVEGVYLH. The Cytoplasmic segment spans residues 240–251; that stretch reads HLLVIVGGSEKG. The helical transmembrane segment at 252 to 275 threads the bilayer; that stretch reads HFRCYLLLGWGAPALFVIPWVIVR. Residues 276 to 290 are Extracellular-facing; it reads YLLENTQCWERNEVK. Residues 291 to 316 form a helical membrane-spanning segment; the sequence is AIWWIIRTPILITILINFFIFIRILG. Over 317–338 the chain is Cytoplasmic; it reads ILVSKLRTRQMRCPDYRLRLAR. A helical transmembrane segment spans residues 339–359; the sequence is STLTLVPLLGVHEVVFAPVTE. At 360-374 the chain is on the extracellular side; that stretch reads EQAEGTLRFAKLAFE. The chain crosses the membrane as a helical span at residues 375-395; it reads IFLSSFQGFLVSVLYCFINKE. At 396–462 the chain is on the cytoplasmic side; that stretch reads VQSEIRRSWR…PGEEVLESYC (67 aa). Positions 421 to 462 are disordered; it reads HAELGPQALPSRSAPREVPITGSTLPSGPLHGPGEEVLESYC.

It belongs to the G-protein coupled receptor 2 family. As to quaternary structure, may form homodimers and heterodimers with GLP1R. Post-translationally, N-glycosylation is required for cell surface expression and lengthens receptor half-life by preventing degradation in the ER. Widely distributed including pancreatic islets, brain and various peripheral tissues.

The protein resides in the cell membrane. In terms of biological role, this is a receptor for GIP. The activity of this receptor is mediated by G proteins which activate adenylyl cyclase. This Mesocricetus auratus (Golden hamster) protein is Gastric inhibitory polypeptide receptor (GIPR).